Here is a 486-residue protein sequence, read N- to C-terminus: Transcriptional regulator ERG (486 aa).

Over residues 41–54 (TASSSSDYGQTSKM) the composition is skewed to polar residues. Disordered regions lie at residues 41–62 (TASS…PQQD) and 79–99 (PSQV…KGGK). 3 positions are modified to phosphoserine: Ser55, Ser88, and Ser103. The PNT domain occupies 120–206 (VPPPNMTTNE…SHLHYLRETP (87 aa)). The tract at residues 249–311 (QRITTRPDLP…ILGPTSSRLA (63 aa)) is disordered. The span at 271-284 (SHLTPQSKAAQPSP) shows a compositional bias: polar residues. Lys289 participates in a covalent cross-link: Glycyl lysine isopeptide (Lys-Gly) (interchain with G-Cter in SUMO2). Residues 318-398 (IQLWQFLLEL…HGKRYAYKFD (81 aa)) constitute a DNA-binding region (ETS).

It belongs to the ETS family. As to quaternary structure, identified in a IGF2BP1-dependent mRNP granule complex containing untranslated mRNAs. Interacts with SETDB1.

Its subcellular location is the nucleus. The protein resides in the cytoplasm. In terms of biological role, transcriptional regulator. May participate in transcriptional regulation through the recruitment of SETDB1 histone methyltransferase and subsequent modification of local chromatin structure. This Mus musculus (Mouse) protein is Transcriptional regulator ERG (Erg).